Here is a 552-residue protein sequence, read N- to C-terminus: CTP synthase (552 aa).

An amidoligase domain region spans residues 1–265; the sequence is MTKYIFITGG…DEIVVRKLRL (265 aa). Ser-13 provides a ligand contact to CTP. Ser-13 provides a ligand contact to UTP. Residues 14–19 and Asp-71 each bind ATP; that span reads SLGKGI. Residues Asp-71 and Glu-139 each coordinate Mg(2+). Residues 146 to 148, 186 to 191, and Lys-222 each bind CTP; these read DIE and KTKPTQ. Residues 186 to 191 and Lys-222 each bind UTP; that span reads KTKPTQ. The 252-residue stretch at 290 to 541 folds into the Glutamine amidotransferase type-1 domain; sequence TVAMVGKYVN…VRAARARSEG (252 aa). Position 351 (Gly-351) interacts with L-glutamine. Cys-378 (nucleophile; for glutamine hydrolysis) is an active-site residue. Residues 379–382, Glu-402, and Arg-469 contribute to the L-glutamine site; that span reads LGMQ. Residues His-514 and Glu-516 contribute to the active site.

Belongs to the CTP synthase family. As to quaternary structure, homotetramer.

The catalysed reaction is UTP + L-glutamine + ATP + H2O = CTP + L-glutamate + ADP + phosphate + 2 H(+). The enzyme catalyses L-glutamine + H2O = L-glutamate + NH4(+). It catalyses the reaction UTP + NH4(+) + ATP = CTP + ADP + phosphate + 2 H(+). Its pathway is pyrimidine metabolism; CTP biosynthesis via de novo pathway; CTP from UDP: step 2/2. Its activity is regulated as follows. Allosterically activated by GTP, when glutamine is the substrate; GTP has no effect on the reaction when ammonia is the substrate. The allosteric effector GTP functions by stabilizing the protein conformation that binds the tetrahedral intermediate(s) formed during glutamine hydrolysis. Inhibited by the product CTP, via allosteric rather than competitive inhibition. Functionally, catalyzes the ATP-dependent amination of UTP to CTP with either L-glutamine or ammonia as the source of nitrogen. Regulates intracellular CTP levels through interactions with the four ribonucleotide triphosphates. In Methylococcus capsulatus (strain ATCC 33009 / NCIMB 11132 / Bath), this protein is CTP synthase.